Here is a 67-residue protein sequence, read N- to C-terminus: Sperm protamine P1 (67 aa).

Residues 1–67 (MASYRNSRSR…RRRKRNNENK (67 aa)) are disordered. Composition is skewed to basic residues over residues 7-25 (SRSR…RSRV) and 34-67 (RSSR…NENK).

It belongs to the protamine P1 family. As to expression, testis.

The protein localises to the nucleus. Its subcellular location is the chromosome. Protamines substitute for histones in the chromatin of sperm during the haploid phase of spermatogenesis. They compact sperm DNA into a highly condensed, stable and inactive complex. The sequence is that of Sperm protamine P1 (PRM1) from Isoodon macrourus (Short-nosed bandicoot).